A 223-amino-acid polypeptide reads, in one-letter code: N-terminal Xaa-Pro-Lys N-methyltransferase 1 (223 aa).

Residues Gly-69, Arg-74, 91 to 93, 119 to 120, and Gln-135 contribute to the S-adenosyl-L-methionine site; these read DVT and LQ.

Belongs to the methyltransferase superfamily. NTM1 family.

The protein resides in the nucleus. It catalyses the reaction N-terminal L-alanyl-L-prolyl-L-lysyl-[protein] + 3 S-adenosyl-L-methionine = N-terminal N,N,N-trimethyl-L-alanyl-L-prolyl-L-lysyl-[protein] + 3 S-adenosyl-L-homocysteine + 3 H(+). The catalysed reaction is N-terminal L-seryl-L-prolyl-L-lysyl-[protein] + 3 S-adenosyl-L-methionine = N-terminal N,N,N-trimethyl-L-seryl-L-prolyl-L-lysyl-[protein] + 3 S-adenosyl-L-homocysteine + 3 H(+). It carries out the reaction N-terminal L-prolyl-L-prolyl-L-lysyl-[protein] + 2 S-adenosyl-L-methionine = N-terminal N,N-dimethyl-L-prolyl-L-prolyl-L-lysyl-[protein] + 2 S-adenosyl-L-homocysteine + 2 H(+). Functionally, distributive alpha-N-methyltransferase that methylates the N-terminus of target proteins containing the N-terminal motif [Ala/Gly/Pro/Ser]-Pro-Lys when the initiator Met is cleaved. Specifically catalyzes mono-, di- or tri-methylation of the exposed alpha-amino group of the Ala, Gly or Ser residue in the [Ala/Gly/Ser]-Pro-Lys motif and mono- or di-methylation of Pro in the Pro-Pro-Lys motif. Required during mitosis for normal bipolar spindle formation and chromosome segregation via its action on target proteins. This is N-terminal Xaa-Pro-Lys N-methyltransferase 1 (ntmt1) from Danio rerio (Zebrafish).